The chain runs to 695 residues: NAD(P)H-quinone oxidoreductase subunit 5, chloroplastic (695 aa).

A run of 15 helical transmembrane segments spans residues 1–21, 32–52, 81–101, 117–137, 139–159, 177–197, 211–231, 250–270, 278–298, 319–339, 346–366, 388–408, 417–437, 535–555, and 594–614; these read WIIPFIPLPVPILIGAGLILF, WAFQSVLLLSIVMIFSIYLSI, IDPLTSIMXXLITTVGIMVLI, FAYMSFFSTSMLGLVTSSNLI, IYIFWELVGLCSYLLIGFWFT, GDFGLLLGILGFYWITGSFEF, NEVNFLFVTLCAVLLFVGAVA, TPISALIHAATMVAAGIFLVA, VIPYIMYLISIIGIITVLLGA, LGYMMLALGMGSYRSALFHLI, ALLFLGSGSIIHSMETIVGYS, ITFLLGTLSLCGIPPLACFWS, WLYSPIFAIIAWATAGLTAFY, LFPIFVLGLFTLFVGSIGIPF, and VLSVSIAYFGIFIASFLYKPI.

It belongs to the complex I subunit 5 family. In terms of assembly, NDH is composed of at least 16 different subunits, 5 of which are encoded in the nucleus.

It is found in the plastid. Its subcellular location is the chloroplast thylakoid membrane. The enzyme catalyses a plastoquinone + NADH + (n+1) H(+)(in) = a plastoquinol + NAD(+) + n H(+)(out). The catalysed reaction is a plastoquinone + NADPH + (n+1) H(+)(in) = a plastoquinol + NADP(+) + n H(+)(out). Functionally, NDH shuttles electrons from NAD(P)H:plastoquinone, via FMN and iron-sulfur (Fe-S) centers, to quinones in the photosynthetic chain and possibly in a chloroplast respiratory chain. The immediate electron acceptor for the enzyme in this species is believed to be plastoquinone. Couples the redox reaction to proton translocation, and thus conserves the redox energy in a proton gradient. In Capsicum baccatum (Peruvian pepper), this protein is NAD(P)H-quinone oxidoreductase subunit 5, chloroplastic (ndhF).